Consider the following 222-residue polypeptide: Pyridoxine/pyridoxamine 5'-phosphate oxidase (222 aa).

Residues 16 to 19 (RVSY) and Lys75 contribute to the substrate site. Residues 70–75 (RTVLCK), 85–86 (FT), Lys92, and Gln114 contribute to the FMN site. 3 residues coordinate substrate: Tyr132, Arg136, and Ser140. Residues 149–150 (QS) and Trp195 each bind FMN. 201–203 (RLH) serves as a coordination point for substrate. Position 205 (Arg205) interacts with FMN.

The protein belongs to the pyridoxamine 5'-phosphate oxidase family. As to quaternary structure, homodimer. Requires FMN as cofactor.

It catalyses the reaction pyridoxamine 5'-phosphate + O2 + H2O = pyridoxal 5'-phosphate + H2O2 + NH4(+). The catalysed reaction is pyridoxine 5'-phosphate + O2 = pyridoxal 5'-phosphate + H2O2. Its pathway is cofactor metabolism; pyridoxal 5'-phosphate salvage; pyridoxal 5'-phosphate from pyridoxamine 5'-phosphate: step 1/1. It participates in cofactor metabolism; pyridoxal 5'-phosphate salvage; pyridoxal 5'-phosphate from pyridoxine 5'-phosphate: step 1/1. In terms of biological role, catalyzes the oxidation of either pyridoxine 5'-phosphate (PNP) or pyridoxamine 5'-phosphate (PMP) into pyridoxal 5'-phosphate (PLP). This Saccharopolyspora erythraea (strain ATCC 11635 / DSM 40517 / JCM 4748 / NBRC 13426 / NCIMB 8594 / NRRL 2338) protein is Pyridoxine/pyridoxamine 5'-phosphate oxidase.